The chain runs to 266 residues: UPF0294 protein YafD (266 aa).

The protein belongs to the UPF0294 family.

The protein localises to the cytoplasm. The protein is UPF0294 protein YafD of Salmonella paratyphi C (strain RKS4594).